The sequence spans 122 residues: Large ribosomal subunit protein uL14 (122 aa).

The protein belongs to the universal ribosomal protein uL14 family. As to quaternary structure, part of the 50S ribosomal subunit. Forms a cluster with proteins L3 and L19. In the 70S ribosome, L14 and L19 interact and together make contacts with the 16S rRNA in bridges B5 and B8.

Its function is as follows. Binds to 23S rRNA. Forms part of two intersubunit bridges in the 70S ribosome. The sequence is that of Large ribosomal subunit protein uL14 from Gemmatimonas aurantiaca (strain DSM 14586 / JCM 11422 / NBRC 100505 / T-27).